A 389-amino-acid polypeptide reads, in one-letter code: MSPPSQDWSTITDANERRKAQNRVAQRNYRSRQKLRVELAEAILYDMPSWRTAVGLKRKRWLETPQSVEDHDTNPDSATPKPSLSSQVIQYHEEGQLVQNPTDFSMSADADVTADVSSGGESSDLSLGVFTPGDDWMNAEIDWTAAMTLAGDTSASEPDLRHRAVGPGNDIHAQPPVSIPVQAASGQHRTLTAPTPAESMSLRTEPPETAVITVTSNREVPNLGDSNEGSRSISTTKQPSEFKTPVLTAIAKGKLDIARLLISSGANIDTRDMHGRTNLHYAVSRSDAKTVRSLLELGADLLMSDASGVTALHMAVGADDQDMVKLLLGWCEQQDRTASSTDHKTTLKQCINSRDGQNMTPLHLCVVMERMDMLKILLDYGADVNIGCD.

2 stretches are compositionally biased toward polar residues: residues 1–13 (MSPP…TITD) and 75–84 (PDSATPKPSL). 3 disordered regions span residues 1–27 (MSPP…VAQR), 65–84 (PQSV…KPSL), and 219–239 (EVPN…TKQP). Residues 12–38 (TDANERRKAQNRVAQRNYRSRQKLRVE) are basic DNA-binding region. 4 ANK repeats span residues 241–270 (EFKT…NIDT), 274–303 (HGRT…DLLM), 307–336 (SGVT…QQDR), and 357–386 (QNMT…DVNI).

This sequence belongs to the bZIP family. Highly divergent.

The protein localises to the nucleus. Its function is as follows. Transcription factor that regulates the expression of the gene cluster that mediates the biosynthesis of apicidin F. Binds to the eight-base-pair motif 5'-TGACGTGA-3' called the 'Api-box' that is found in all promoters of the apicidin F cluster except in the promoter region of apf2 itself. The sequence is that of Apicidin F cluster transcription factor apf2 from Gibberella fujikuroi (strain CBS 195.34 / IMI 58289 / NRRL A-6831) (Bakanae and foot rot disease fungus).